Here is a 1017-residue protein sequence, read N- to C-terminus: Disease resistance protein RML1B (1017 aa).

Positions tyrosine 12–leucine 176 constitute a TIR domain. Glutamate 87 is a catalytic residue. The NB-ARC domain maps to glutamate 191–aspartate 447. LRR repeat units follow at residues isoleucine 539–lysine 562, proline 583–proline 605, glutamate 606–leucine 628, lysine 629–threonine 652, leucine 654–leucine 675, histidine 676–leucine 698, glutamate 699–tyrosine 724, cysteine 738–proline 760, threonine 761–serine 782, and histidine 784–threonine 809.

It carries out the reaction NAD(+) + H2O = ADP-D-ribose + nicotinamide + H(+). Its function is as follows. TIR-NB-LRR receptor-like protein that confers resistance to the pathogen Leptosphaeria maculans (blackleg disease). The chain is Disease resistance protein RML1B from Arabidopsis thaliana (Mouse-ear cress).